Consider the following 231-residue polypeptide: ATP phosphoribosyltransferase (231 aa).

This sequence belongs to the ATP phosphoribosyltransferase family. Short subfamily. Heteromultimer composed of HisG and HisZ subunits.

The protein resides in the cytoplasm. It catalyses the reaction 1-(5-phospho-beta-D-ribosyl)-ATP + diphosphate = 5-phospho-alpha-D-ribose 1-diphosphate + ATP. It participates in amino-acid biosynthesis; L-histidine biosynthesis; L-histidine from 5-phospho-alpha-D-ribose 1-diphosphate: step 1/9. Functionally, catalyzes the condensation of ATP and 5-phosphoribose 1-diphosphate to form N'-(5'-phosphoribosyl)-ATP (PR-ATP). Has a crucial role in the pathway because the rate of histidine biosynthesis seems to be controlled primarily by regulation of HisG enzymatic activity. The polypeptide is ATP phosphoribosyltransferase (Brucella melitensis biotype 2 (strain ATCC 23457)).